We begin with the raw amino-acid sequence, 255 residues long: Glutamate racemase (255 aa).

Substrate-binding positions include 7–8 and 39–40; these read DS and YG. Cys70 functions as the Proton donor/acceptor in the catalytic mechanism. 71–72 contacts substrate; sequence NT. The Proton donor/acceptor role is filled by Cys181. Residue 182 to 183 coordinates substrate; the sequence is TH.

It belongs to the aspartate/glutamate racemases family.

The enzyme catalyses L-glutamate = D-glutamate. The protein operates within cell wall biogenesis; peptidoglycan biosynthesis. Provides the (R)-glutamate required for cell wall biosynthesis. This Helicobacter pylori (strain G27) protein is Glutamate racemase.